A 164-amino-acid polypeptide reads, in one-letter code: UPF0114 protein YqhA (164 aa).

Helical transmembrane passes span Tyr10–Leu32, Leu53–Phe75, and Leu136–Tyr155.

Belongs to the UPF0114 family.

The protein localises to the cell membrane. This chain is UPF0114 protein YqhA, found in Shigella flexneri.